The chain runs to 399 residues: Ectoine hydrolase (399 aa).

Belongs to the peptidase M24 family.

It localises to the cytoplasm. It catalyses the reaction L-ectoine + H2O = (2S)-2-acetamido-4-aminobutanoate. Its function is as follows. Involved in the degradation of ectoine, which allows H.elongata to utilize ectoine as both a carbon and a nitrogen source for growth. Catalyzes the hydrolysis of ectoine to N-acetyl-L-2,4-diaminobutyric acid (N-Ac-DABA). It can produce both isoforms N-gamma-acetyl-L-2,4-diaminobutyric acid (N-gamma-Ac-DABA) and N-alpha-acetyl-L-2,4-diaminobutyric acid (-Nalpha-Ac-DABA), however N-alpha-Ac-DABA is the essential substrate for the subsequent catabolic enzyme DoeB. The polypeptide is Ectoine hydrolase (Halomonas elongata (strain ATCC 33173 / DSM 2581 / NBRC 15536 / NCIMB 2198 / 1H9)).